The following is a 99-amino-acid chain: Large ribosomal subunit protein bL27 (99 aa).

Residues 1 to 9 (MLIMNLQLF) constitute a propeptide that is removed on maturation.

This sequence belongs to the bacterial ribosomal protein bL27 family. In terms of processing, the N-terminus is cleaved by ribosomal processing cysteine protease Prp.

The chain is Large ribosomal subunit protein bL27 from Clostridium botulinum (strain Alaska E43 / Type E3).